A 225-amino-acid polypeptide reads, in one-letter code: ATP phosphoribosyltransferase (225 aa).

It belongs to the ATP phosphoribosyltransferase family. Short subfamily. In terms of assembly, heteromultimer composed of HisG and HisZ subunits.

It is found in the cytoplasm. It carries out the reaction 1-(5-phospho-beta-D-ribosyl)-ATP + diphosphate = 5-phospho-alpha-D-ribose 1-diphosphate + ATP. Its pathway is amino-acid biosynthesis; L-histidine biosynthesis; L-histidine from 5-phospho-alpha-D-ribose 1-diphosphate: step 1/9. In terms of biological role, catalyzes the condensation of ATP and 5-phosphoribose 1-diphosphate to form N'-(5'-phosphoribosyl)-ATP (PR-ATP). Has a crucial role in the pathway because the rate of histidine biosynthesis seems to be controlled primarily by regulation of HisG enzymatic activity. The chain is ATP phosphoribosyltransferase from Herminiimonas arsenicoxydans.